Consider the following 326-residue polypeptide: Biotin synthase (326 aa).

In terms of domain architecture, Radical SAM core spans 51–278 (NEVQRSTLLS…TSYVRLSAGR (228 aa)). Positions 66, 70, and 73 each coordinate [4Fe-4S] cluster. [2Fe-2S] cluster is bound by residues C110, C141, C201, and R273.

This sequence belongs to the radical SAM superfamily. Biotin synthase family. Homodimer. The cofactor is [4Fe-4S] cluster. [2Fe-2S] cluster serves as cofactor.

The catalysed reaction is (4R,5S)-dethiobiotin + (sulfur carrier)-SH + 2 reduced [2Fe-2S]-[ferredoxin] + 2 S-adenosyl-L-methionine = (sulfur carrier)-H + biotin + 2 5'-deoxyadenosine + 2 L-methionine + 2 oxidized [2Fe-2S]-[ferredoxin]. The protein operates within cofactor biosynthesis; biotin biosynthesis; biotin from 7,8-diaminononanoate: step 2/2. In terms of biological role, catalyzes the conversion of dethiobiotin (DTB) to biotin by the insertion of a sulfur atom into dethiobiotin via a radical-based mechanism. This Azoarcus sp. (strain BH72) protein is Biotin synthase.